Reading from the N-terminus, the 624-residue chain is Ubiquilin-2 (624 aa).

Disordered stretches follow at residues Met-1–Ile-32 and Asn-106–Asn-141. Position 2 is an N-acetylalanine (Ala-2). Over residues Arg-15 to Ile-32 the composition is skewed to low complexity. The Ubiquitin-like domain occupies Ile-33 to Arg-107. The span at Asn-106–Pro-115 shows a compositional bias: polar residues. The span at Ser-116 to Asn-141 shows a compositional bias: low complexity. 2 consecutive STI1 domains span residues Ser-178–Met-206 and Asn-208–Met-247. The interval Phe-287–Ala-349 is disordered. A compositionally biased stretch (low complexity) spans Ser-294–Gly-304. A compositionally biased stretch (pro residues) spans Leu-316–Ala-325. Residues Thr-326–Ala-349 are compositionally biased toward low complexity. 2 consecutive STI1 domains span residues Asn-379–Met-426 and Leu-430–Leu-462. 12 tandem repeats follow at residues Pro-491 to Gly-493, Pro-494 to Thr-496, Pro-497 to Gly-499, Pro-500 to Gly-502, Pro-503 to Val-505, Pro-506 to Thr-508, Pro-509 to Gly-511, Pro-512 to Gly-514, Pro-515 to Gly-517, Pro-518 to Gly-520, Pro-521 to Ala-523, and Pro-524 to Gly-526. Residues Pro-491–Gly-526 form a 12 X 3 AA tandem repeats of P-X-X region. The interval Pro-512 to Asn-556 is disordered. Residues Gly-535–Ser-553 are compositionally biased toward low complexity. The UBA domain maps to Arg-581–Ser-621.

As to quaternary structure, homodimer. Forms heterodimer with UBQLN1. Binds UBE3A and BTRC. Interacts with the 19S proteasome subunit. Interacts with C9orf72. Interacts with HNRNPA1 and HNRNPU. Found in a complex with UBQLN1 and MAP1LC3A/B/C. Interacts with EPS15, EPN1 and EPN2. Interacts with HERPUD1. Interacts with RAD23A. Interacts with TARDBP. Interacts (via C-terminus) with FAF2 (via N-terminus). Interacts with UBQLN4. Binds CD47. Post-translationally, degraded during macroautophagy.

The protein localises to the cytoplasm. It localises to the nucleus. The protein resides in the membrane. Its subcellular location is the cytoplasmic vesicle. It is found in the autophagosome. Functionally, plays an important role in the regulation of different protein degradation mechanisms and pathways including ubiquitin-proteasome system (UPS), autophagy and the endoplasmic reticulum-associated protein degradation (ERAD) pathway. Mediates the proteasomal targeting of misfolded or accumulated proteins for degradation by binding (via UBA domain) to their polyubiquitin chains and by interacting (via ubiquitin-like domain) with the subunits of the proteasome. Plays a role in the ERAD pathway via its interaction with ER-localized proteins FAF2/UBXD8 and HERPUD1 and may form a link between the polyubiquitinated ERAD substrates and the proteasome. Involved in the regulation of macroautophagy and autophagosome formation; required for maturation of autophagy-related protein LC3 from the cytosolic form LC3-I to the membrane-bound form LC3-II and may assist in the maturation of autophagosomes to autolysosomes by mediating autophagosome-lysosome fusion. Negatively regulates the endocytosis of GPCR receptors: AVPR2 and ADRB2, by specifically reducing the rate at which receptor-arrestin complexes concentrate in clathrin-coated pits (CCPs). This chain is Ubiquilin-2 (UBQLN2), found in Homo sapiens (Human).